Here is a 168-residue protein sequence, read N- to C-terminus: Phosphopantetheine adenylyltransferase (168 aa).

Thr14 serves as a coordination point for substrate. ATP-binding positions include 14 to 15 and His22; that span reads TF. 3 residues coordinate substrate: Lys46, Leu78, and Arg92. ATP is bound by residues 93–95, Glu103, and 128–134; these read GLR and YSFISSS.

It belongs to the bacterial CoaD family. As to quaternary structure, homohexamer. It depends on Mg(2+) as a cofactor.

It is found in the cytoplasm. It catalyses the reaction (R)-4'-phosphopantetheine + ATP + H(+) = 3'-dephospho-CoA + diphosphate. It participates in cofactor biosynthesis; coenzyme A biosynthesis; CoA from (R)-pantothenate: step 4/5. In terms of biological role, reversibly transfers an adenylyl group from ATP to 4'-phosphopantetheine, yielding dephospho-CoA (dPCoA) and pyrophosphate. The polypeptide is Phosphopantetheine adenylyltransferase (Xanthomonas axonopodis pv. citri (strain 306)).